The primary structure comprises 271 residues: Ribosomal RNA small subunit methyltransferase A (271 aa).

S-adenosyl-L-methionine is bound by residues Asn-28, Leu-30, Gly-54, Glu-75, Asp-99, and Asn-117.

It belongs to the class I-like SAM-binding methyltransferase superfamily. rRNA adenine N(6)-methyltransferase family. RsmA subfamily.

Its subcellular location is the cytoplasm. The catalysed reaction is adenosine(1518)/adenosine(1519) in 16S rRNA + 4 S-adenosyl-L-methionine = N(6)-dimethyladenosine(1518)/N(6)-dimethyladenosine(1519) in 16S rRNA + 4 S-adenosyl-L-homocysteine + 4 H(+). Specifically dimethylates two adjacent adenosines (A1518 and A1519) in the loop of a conserved hairpin near the 3'-end of 16S rRNA in the 30S particle. May play a critical role in biogenesis of 30S subunits. The sequence is that of Ribosomal RNA small subunit methyltransferase A from Thermus thermophilus (strain ATCC BAA-163 / DSM 7039 / HB27).